A 382-amino-acid polypeptide reads, in one-letter code: MYIAGVMSGTSLDGIDVALVRIEGSGVESKVELIHFTTVPFCNDIKSEIQQALSIENSNVQLICSLNFKLGLCFANAVKEVCKEANFSLEQLDLIGSHGQTIYHQPKQDGNRIPSTLQIGEPAVIAYETNTTVISNFRTMDMAAGGQGAPLVPYSEVILYRDPSKNRLLQNIGGISNVTVIPTQQSDQNVIAFDTGPGNMIIDEVCQRLFQLPYDQNGEIAKKGVVVDEILTYCMSHPFLKMNPPKSTGREQFGEEFVSELLKRFKKHSKENILTTVTMFTASSIVHHYKKFILPYYEIDEVILGGGGSYNSTLVEMLRNGLKDENCTIFIQEDIGYSSEAKEAIAFAILANETHHRNPSNVPSATGAKQSVVLGNVTFPPI.

9-16 (GTSLDGID) provides a ligand contact to ATP.

Belongs to the anhydro-N-acetylmuramic acid kinase family.

The catalysed reaction is 1,6-anhydro-N-acetyl-beta-muramate + ATP + H2O = N-acetyl-D-muramate 6-phosphate + ADP + H(+). The protein operates within amino-sugar metabolism; 1,6-anhydro-N-acetylmuramate degradation. Its pathway is cell wall biogenesis; peptidoglycan recycling. In terms of biological role, catalyzes the specific phosphorylation of 1,6-anhydro-N-acetylmuramic acid (anhMurNAc) with the simultaneous cleavage of the 1,6-anhydro ring, generating MurNAc-6-P. Is required for the utilization of anhMurNAc either imported from the medium or derived from its own cell wall murein, and thus plays a role in cell wall recycling. The sequence is that of Anhydro-N-acetylmuramic acid kinase from Bacillus cereus (strain ZK / E33L).